The sequence spans 568 residues: Periplasmic trehalase (568 aa).

Residues 1 to 39 (MPYATARSGDVMSSAAPPCCTSLLGLSLSMFVAPGTLTA) form the signal peptide. Residues R169, 176-177 (WD), N213, 222-224 (RSQ), 294-296 (RPE), and G327 each bind substrate. Residues D329 and E511 each act as proton donor/acceptor in the active site. A substrate-binding site is contributed by E526.

This sequence belongs to the glycosyl hydrolase 37 family.

The protein resides in the periplasm. The catalysed reaction is alpha,alpha-trehalose + H2O = alpha-D-glucose + beta-D-glucose. Provides the cells with the ability to utilize trehalose at high osmolarity by splitting it into glucose molecules that can subsequently be taken up by the phosphotransferase-mediated uptake system. This Xanthomonas axonopodis pv. citri (strain 306) protein is Periplasmic trehalase.